The following is a 327-amino-acid chain: rRNA 2'-O-methyltransferase fibrillarin (327 aa).

Residues 1-93 (MKPGFSPRGG…RGNQSGKNVM (93 aa)) are disordered. Over residues 7-80 (PRGGGFGGRG…GGGRGRGGGR (74 aa)) the composition is skewed to gly residues. An asymmetric dimethylarginine mark is found at Arg8, Arg15, Arg21, Arg24, Arg28, and Arg31. Residues Lys90, Lys108, and Lys115 each participate in a glycyl lysine isopeptide (Lys-Gly) (interchain with G-Cter in SUMO2) cross-link. Lys108 is modified (N6-acetyllysine). Residue Ser122 is modified to Phosphoserine. Residue Lys127 is modified to N6-acetyllysine. 2 positions are modified to phosphoserine: Ser130 and Ser132. Residues Lys137, Lys149, and Lys164 each participate in a glycyl lysine isopeptide (Lys-Gly) (interchain with G-Cter in SUMO2) cross-link. S-adenosyl-L-methionine is bound by residues 178-179 (TT) and 197-198 (EF). N6-acetyllysine is present on residues Lys211 and Lys212. Residues 222–223 (DA) and 242–245 (DVAQ) each bind S-adenosyl-L-methionine.

It belongs to the methyltransferase superfamily. Fibrillarin family. In terms of assembly, component of box C/D small nucleolar ribonucleoprotein (snoRNP) particles that contain SNU13, FBL, NOP5 and NOP56, plus a guide RNA. It is associated with the U3, U8, U13, X and Y small nuclear RNAs. Component of several ribosomal and nucleolar protein complexes. Part of the small subunit (SSU) processome, composed of more than 70 proteins and the RNA chaperone small nucleolar RNA (snoRNA) U3. Interacts with PRMT5 and UTP20. Interacts with DDX5 and C1QBP. Interacts with NOL11. Interacts with PIH1D1. Interacts with RRP1B. Interacts with NOLC1. Interacts with SDE2. Interacts with NOP2 and NOP56. Ubiquitinated. Ubiquitination leads to proteasomal degradation. Deubiquitinated by USP36. In terms of processing, by homology to other fibrillarins, some or all of the N-terminal domain arginines are modified to asymmetric dimethylarginine (DMA). Post-translationally, acetylated by CREBBP/CBP, preventing methylation of 'Gln-105' of histone H2A (H2AQ104me), without affecting rRNA methylation. Deacetylation by SIRT7 restores methylation of 'Gln-105' of histone H2A (H2AQ104me).

The protein localises to the nucleus. The protein resides in the nucleolus. Its subcellular location is the nucleoplasm. The catalysed reaction is L-glutaminyl-[histone H2A] + S-adenosyl-L-methionine = N(5)-methyl-L-glutaminyl-[histone H2A] + S-adenosyl-L-homocysteine + H(+). The enzyme catalyses a ribonucleotide in rRNA + S-adenosyl-L-methionine = a 2'-O-methylribonucleotide in rRNA + S-adenosyl-L-homocysteine + H(+). It carries out the reaction a ribonucleotide in U6 snRNA + S-adenosyl-L-methionine = a 2'-O-methylribonucleotide in U6 snRNA + S-adenosyl-L-homocysteine + H(+). Functionally, S-adenosyl-L-methionine-dependent methyltransferase that has the ability to methylate both RNAs and proteins. Involved in pre-rRNA processing by catalyzing the site-specific 2'-hydroxyl methylation of ribose moieties in pre-ribosomal RNA. Site specificity is provided by a guide RNA that base pairs with the substrate. Methylation occurs at a characteristic distance from the sequence involved in base pairing with the guide RNA. Probably catalyzes 2'-O-methylation of U6 snRNAs in box C/D RNP complexes. U6 snRNA 2'-O-methylation is required for mRNA splicing fidelity. Also acts as a protein methyltransferase by mediating methylation of 'Gln-105' of histone H2A (H2AQ104me), a modification that impairs binding of the FACT complex and is specifically present at 35S ribosomal DNA locus. Part of the small subunit (SSU) processome, first precursor of the small eukaryotic ribosomal subunit. During the assembly of the SSU processome in the nucleolus, many ribosome biogenesis factors, an RNA chaperone and ribosomal proteins associate with the nascent pre-rRNA and work in concert to generate RNA folding, modifications, rearrangements and cleavage as well as targeted degradation of pre-ribosomal RNA by the RNA exosome. The polypeptide is rRNA 2'-O-methyltransferase fibrillarin (Fbl) (Rattus norvegicus (Rat)).